The primary structure comprises 394 residues: Acetate kinase (394 aa).

N7 serves as a coordination point for Mg(2+). K14 serves as a coordination point for ATP. R88 serves as a coordination point for substrate. D145 serves as the catalytic Proton donor/acceptor. ATP-binding positions include 205–209, 279–281, and 327–331; these read HLGNG, DFR, and GIGEN. E379 contacts Mg(2+).

This sequence belongs to the acetokinase family. Homodimer. Mg(2+) serves as cofactor. Mn(2+) is required as a cofactor.

It localises to the cytoplasm. It catalyses the reaction acetate + ATP = acetyl phosphate + ADP. It functions in the pathway metabolic intermediate biosynthesis; acetyl-CoA biosynthesis; acetyl-CoA from acetate: step 1/2. Catalyzes the formation of acetyl phosphate from acetate and ATP. Can also catalyze the reverse reaction. The sequence is that of Acetate kinase from Campylobacter lari (strain RM2100 / D67 / ATCC BAA-1060).